Here is a 106-residue protein sequence, read N- to C-terminus: Photosystem II 5 kDa protein, chloroplastic (106 aa).

A chloroplast-targeting transit peptide spans 1 to 76; that stretch reads MASITMMSSF…ACSVAKTAMA (76 aa). Residues Cys95 and Cys104 are joined by a disulfide bond.

Disulfide bond. In terms of tissue distribution, expressed in midvein, lamina and periphery of leaves (at protein level).

It is found in the plastid. The protein resides in the chloroplast thylakoid membrane. May be a component of the oxygen-evolving complex. This is Photosystem II 5 kDa protein, chloroplastic from Petunia hybrida (Petunia).